We begin with the raw amino-acid sequence, 92 residues long: MSETQNTQTKRQRTLVGKVVSNKMDKTVVVLVERRVKHPIYGKIVMRSAKYKAHDESNQYNEGDTVEIAEGRPISRSKSWNVVRLVEAVRII.

This sequence belongs to the universal ribosomal protein uS17 family. In terms of assembly, part of the 30S ribosomal subunit.

Its function is as follows. One of the primary rRNA binding proteins, it binds specifically to the 5'-end of 16S ribosomal RNA. This Bordetella petrii (strain ATCC BAA-461 / DSM 12804 / CCUG 43448) protein is Small ribosomal subunit protein uS17.